A 155-amino-acid chain; its full sequence is Aspartate carbamoyltransferase regulatory chain (155 aa).

4 residues coordinate Zn(2+): Cys-112, Cys-117, Cys-138, and Cys-141.

The protein belongs to the PyrI family. As to quaternary structure, contains catalytic and regulatory chains. The cofactor is Zn(2+).

In terms of biological role, involved in allosteric regulation of aspartate carbamoyltransferase. The sequence is that of Aspartate carbamoyltransferase regulatory chain from Methanocorpusculum labreanum (strain ATCC 43576 / DSM 4855 / Z).